Here is a 443-residue protein sequence, read N- to C-terminus: GTPase Der (443 aa).

EngA-type G domains follow at residues 3 to 167 and 176 to 349; these read PVIA…PEEK and IKIA…QSIQ. GTP contacts are provided by residues 9–16, 56–60, 119–122, 182–189, 229–233, and 294–297; these read GRPNVGKS, DTGGL, NKAD, DTAGI, and NKWD. A KH-like domain is found at 350–434; that stretch reads QELTTGQLTR…PVHIKLKTDP (85 aa).

The protein belongs to the TRAFAC class TrmE-Era-EngA-EngB-Septin-like GTPase superfamily. EngA (Der) GTPase family. Associates with the 50S ribosomal subunit.

Functionally, GTPase that plays an essential role in the late steps of ribosome biogenesis. The protein is GTPase Der of Coxiella burnetii (strain CbuK_Q154) (Coxiella burnetii (strain Q154)).